A 662-amino-acid chain; its full sequence is MKQFKLISDYKPSGDQGEAIKALSDGIIAGDKFQTLKGVTGSGKTFTMANIIQAVQKPTLIISHNKTLAAQLYREFKTFFPENAVEYFVSYYDYYQPEAYVPARDLYIEKDASINDEIDRLRLSATFSLMERRDVIVVSTVSCIYGLGLPESWRDLRITIEKGENIEIEKLKKQLISLQYERNDAVLERGRFRVKGDVMEIFPAYMEDAYRLEFDWEEIVRIRKFNPISGEVIQEYEELSIYPAKHFVMPEDAIPNALERIKKELEERLNVLNKEGKLLEAERLKTRTEYDIEMLSEMGYCPGIENYSAPIANRKPGEPPATLFHYFPDDFLLFMDESHVTFPQVGAMYEGDRSRKQNLVDFGFRLPCALDNRPLKIDEFEKMLNQAVFVSATPGPKEIKYSTRIVEQVIRPTGLLDPIIEIHKSEGQMEHIYGEVKKRIALNERSLILTLTKKMAEDLTDYLTGLGLKVKYIHSEVETIERVEILKGLRAGEFDVLIGINLLREGIDLPEVSFIGILDADKIGFLRSTTSLIQIVGRAARNENGKVVMYADRISDAMKETIEETNRRRAIQEAYNKEHGITPKTIKKAIEDILTRENEIKKEAALAEAGPLINSLNILNPADRKKLIKKLEAQMAEYADMLMFEEAAVIRDKIEEVKRIGS.

A Helicase ATP-binding domain is found at 25-411 (DGIIAGDKFQ…STRIVEQVIR (387 aa)). 38–45 (GVTGSGKT) provides a ligand contact to ATP. A Beta-hairpin motif is present at residues 91 to 114 (YYDYYQPEAYVPARDLYIEKDASI). The region spanning 428 to 594 (QMEHIYGEVK…TIKKAIEDIL (167 aa)) is the Helicase C-terminal domain. The UVR domain maps to 625–660 (KKLIKKLEAQMAEYADMLMFEEAAVIRDKIEEVKRI).

The protein belongs to the UvrB family. In terms of assembly, forms a heterotetramer with UvrA during the search for lesions. Interacts with UvrC in an incision complex.

It localises to the cytoplasm. Its function is as follows. The UvrABC repair system catalyzes the recognition and processing of DNA lesions. A damage recognition complex composed of 2 UvrA and 2 UvrB subunits scans DNA for abnormalities. Upon binding of the UvrA(2)B(2) complex to a putative damaged site, the DNA wraps around one UvrB monomer. DNA wrap is dependent on ATP binding by UvrB and probably causes local melting of the DNA helix, facilitating insertion of UvrB beta-hairpin between the DNA strands. Then UvrB probes one DNA strand for the presence of a lesion. If a lesion is found the UvrA subunits dissociate and the UvrB-DNA preincision complex is formed. This complex is subsequently bound by UvrC and the second UvrB is released. If no lesion is found, the DNA wraps around the other UvrB subunit that will check the other stand for damage. The sequence is that of UvrABC system protein B from Treponema denticola (strain ATCC 35405 / DSM 14222 / CIP 103919 / JCM 8153 / KCTC 15104).